We begin with the raw amino-acid sequence, 205 residues long: Holliday junction branch migration complex subunit RuvA (205 aa).

Residues 1-64 are domain I; that stretch reads MIGRLRGVLI…EDAQLLYGFI (64 aa). The interval 65 to 143 is domain II; it reads TKQERSLFRL…SLMEASVGSE (79 aa). Positions 144–156 are flexible linker; that stretch reads REFVLQSNYSPAP. The domain III stretch occupies residues 157–205; it reads TVNSAEEDAISALISLGYKPPQASKAVSAAYKEGMDSETLIKAALKSML.

This sequence belongs to the RuvA family. Homotetramer. Forms an RuvA(8)-RuvB(12)-Holliday junction (HJ) complex. HJ DNA is sandwiched between 2 RuvA tetramers; dsDNA enters through RuvA and exits via RuvB. An RuvB hexamer assembles on each DNA strand where it exits the tetramer. Each RuvB hexamer is contacted by two RuvA subunits (via domain III) on 2 adjacent RuvB subunits; this complex drives branch migration. In the full resolvosome a probable DNA-RuvA(4)-RuvB(12)-RuvC(2) complex forms which resolves the HJ.

The protein resides in the cytoplasm. Functionally, the RuvA-RuvB-RuvC complex processes Holliday junction (HJ) DNA during genetic recombination and DNA repair, while the RuvA-RuvB complex plays an important role in the rescue of blocked DNA replication forks via replication fork reversal (RFR). RuvA specifically binds to HJ cruciform DNA, conferring on it an open structure. The RuvB hexamer acts as an ATP-dependent pump, pulling dsDNA into and through the RuvAB complex. HJ branch migration allows RuvC to scan DNA until it finds its consensus sequence, where it cleaves and resolves the cruciform DNA. The chain is Holliday junction branch migration complex subunit RuvA from Shewanella sp. (strain MR-7).